Consider the following 198-residue polypeptide: Small ribosomal subunit protein uS11 (198 aa).

Low complexity-rich tracts occupy residues 1-11 and 19-58; these read MSGTEAGAGEP and EAAQ…TAQP. Disordered stretches follow at residues 1-72 and 178-198; these read MSGT…TPAD and DVTP…GRRV. The span at 187-198 shows a compositional bias: basic residues; that stretch reads TRKKGGKRGRRV.

It belongs to the universal ribosomal protein uS11 family. As to quaternary structure, part of the 30S ribosomal subunit.

Located on the platform of the 30S subunit. The chain is Small ribosomal subunit protein uS11 from Cenarchaeum symbiosum (strain A).